A 262-amino-acid polypeptide reads, in one-letter code: Hydroxyethylthiazole kinase (262 aa).

Substrate is bound at residue Met50. ATP-binding residues include Arg125 and Thr171. Residue Gly198 coordinates substrate.

Belongs to the Thz kinase family. Requires Mg(2+) as cofactor.

It carries out the reaction 5-(2-hydroxyethyl)-4-methylthiazole + ATP = 4-methyl-5-(2-phosphooxyethyl)-thiazole + ADP + H(+). It participates in cofactor biosynthesis; thiamine diphosphate biosynthesis; 4-methyl-5-(2-phosphoethyl)-thiazole from 5-(2-hydroxyethyl)-4-methylthiazole: step 1/1. Its function is as follows. Catalyzes the phosphorylation of the hydroxyl group of 4-methyl-5-beta-hydroxyethylthiazole (THZ). In Escherichia coli O6:H1 (strain CFT073 / ATCC 700928 / UPEC), this protein is Hydroxyethylthiazole kinase.